We begin with the raw amino-acid sequence, 667 residues long: Probable potassium transport system protein Kup (667 aa).

A run of 12 helical transmembrane segments spans residues 16 to 36 (GFII…LYTM), 58 to 78 (VSLI…LIAL), 101 to 121 (WLII…ALTP), 146 to 166 (TNVI…QRFG), 167 to 187 (TGVI…VLGI), 221 to 241 (IFIL…YSDL), 253 to 273 (WPFV…WILA), 294 to 314 (VYLV…LISG), 343 to 363 (LYIP…VLYF), 373 to 393 (YGLA…YYLI), 399 to 419 (PLLA…FFLA), and 431 to 451 (VVVL…GTVI).

The protein belongs to the HAK/KUP transporter (TC 2.A.72) family.

It is found in the cell membrane. It catalyses the reaction K(+)(in) + H(+)(in) = K(+)(out) + H(+)(out). Functionally, transport of potassium into the cell. Likely operates as a K(+):H(+) symporter. This Streptococcus equi subsp. zooepidemicus (strain H70) protein is Probable potassium transport system protein Kup.